A 560-amino-acid chain; its full sequence is Dihydroxy-acid dehydratase (560 aa).

A [2Fe-2S] cluster-binding site is contributed by Cys50. Mg(2+) is bound at residue Asp82. Cys123 contributes to the [2Fe-2S] cluster binding site. Asp124 and Lys125 together coordinate Mg(2+). Lys125 carries the N6-carboxylysine modification. Residue Cys195 participates in [2Fe-2S] cluster binding. A Mg(2+)-binding site is contributed by Glu446. Catalysis depends on Ser472, which acts as the Proton acceptor.

Belongs to the IlvD/Edd family. In terms of assembly, homodimer. Requires [2Fe-2S] cluster as cofactor. Mg(2+) is required as a cofactor.

It carries out the reaction (2R)-2,3-dihydroxy-3-methylbutanoate = 3-methyl-2-oxobutanoate + H2O. It catalyses the reaction (2R,3R)-2,3-dihydroxy-3-methylpentanoate = (S)-3-methyl-2-oxopentanoate + H2O. The protein operates within amino-acid biosynthesis; L-isoleucine biosynthesis; L-isoleucine from 2-oxobutanoate: step 3/4. It functions in the pathway amino-acid biosynthesis; L-valine biosynthesis; L-valine from pyruvate: step 3/4. Functionally, functions in the biosynthesis of branched-chain amino acids. Catalyzes the dehydration of (2R,3R)-2,3-dihydroxy-3-methylpentanoate (2,3-dihydroxy-3-methylvalerate) into 2-oxo-3-methylpentanoate (2-oxo-3-methylvalerate) and of (2R)-2,3-dihydroxy-3-methylbutanoate (2,3-dihydroxyisovalerate) into 2-oxo-3-methylbutanoate (2-oxoisovalerate), the penultimate precursor to L-isoleucine and L-valine, respectively. The polypeptide is Dihydroxy-acid dehydratase (Leptothrix cholodnii (strain ATCC 51168 / LMG 8142 / SP-6) (Leptothrix discophora (strain SP-6))).